Consider the following 168-residue polypeptide: Desumoylating isopeptidase 1 (168 aa).

The PPPDE domain occupies 7-149 (YPVKLYVYDL…FGQALRPFLD (143 aa)). The active site involves H38. The Nuclear export signal 1 signature appears at 83–91 (IFLEYLSSL). Residue C108 is part of the active site. Residues 139 to 153 (PFGQALRPFLDSIQI) carry the Nuclear export signal 2 motif.

Belongs to the DeSI family. As to quaternary structure, homodimer. Interacts with UBQLN4; leading to the export of UBQLN4 from the nucleus.

It localises to the cytoplasm. The protein resides in the nucleus. It carries out the reaction S-hexadecanoyl-L-cysteinyl-[protein] + H2O = L-cysteinyl-[protein] + hexadecanoate + H(+). Its function is as follows. Protease which deconjugates SUMO1, SUMO2 and SUMO3 from some substrate proteins. Has isopeptidase but not SUMO-processing activity. Desumoylates ZBTB46. Collaborates with UBQLN4 in the export of ubiquitinated proteins from the nucleus to the cytoplasm. Exhibits palmitoyl protein thioesterase (S-depalmitoylation) activity towards synthetic substrates 4-methylumbelliferyl-6-S-palmitoyl-beta-D-glucopyranoside and S-depalmitoylation probe 5 (DPP-5). The polypeptide is Desumoylating isopeptidase 1 (Desi1) (Rattus norvegicus (Rat)).